The sequence spans 473 residues: Ribulose bisphosphate carboxylase large chain (473 aa).

Residues 1-2 (MS) constitute a propeptide that is removed on maturation. The residue at position 3 (P3) is an N-acetylproline. K14 carries the N6,N6,N6-trimethyllysine modification. Substrate-binding residues include N123 and T173. K175 acts as the Proton acceptor in catalysis. Position 177 (K177) interacts with substrate. K201, D203, and E204 together coordinate Mg(2+). An N6-carboxylysine modification is found at K201. The Proton acceptor role is filled by H294. Substrate-binding residues include R295, H327, and S379.

It belongs to the RuBisCO large chain family. Type I subfamily. In terms of assembly, heterohexadecamer of 8 large chains and 8 small chains; disulfide-linked. The disulfide link is formed within the large subunit homodimers. Mg(2+) serves as cofactor. Post-translationally, the disulfide bond which can form in the large chain dimeric partners within the hexadecamer appears to be associated with oxidative stress and protein turnover.

It localises to the plastid. It is found in the chloroplast. It catalyses the reaction 2 (2R)-3-phosphoglycerate + 2 H(+) = D-ribulose 1,5-bisphosphate + CO2 + H2O. The enzyme catalyses D-ribulose 1,5-bisphosphate + O2 = 2-phosphoglycolate + (2R)-3-phosphoglycerate + 2 H(+). Functionally, ruBisCO catalyzes two reactions: the carboxylation of D-ribulose 1,5-bisphosphate, the primary event in carbon dioxide fixation, as well as the oxidative fragmentation of the pentose substrate in the photorespiration process. Both reactions occur simultaneously and in competition at the same active site. The chain is Ribulose bisphosphate carboxylase large chain from Monarda didyma (Scarlet bee-balm).